A 163-amino-acid chain; its full sequence is Retinoic acid receptor responder protein 2 (163 aa).

An N-terminal signal peptide occupies residues 1 to 20; it reads MRRLLIPLALWLGAVGVGVA. Cystine bridges form between Cys-77–Cys-87, Cys-98–Cys-117, and Cys-101–Cys-135. A propeptide spanning residues 158 to 163 is cleaved from the precursor; the sequence is KALPRS.

In terms of processing, secreted in an inactive precursor form, prochemerin, which is proteolytically processed by a variety of extracellular proteases to generate forms with differing levels of bioactivity. For example, the removal of six amino acids results in chemerin-157, which exhibits the highest activity, while removal of seven amino acids results in chemerin-156 which has slightly less activity. Some proteases are able to cleave at more than one site and chemerin forms may be sequentially processed by different enzymes to modulate activity levels. The coordinated expression and activity of chemerin-modifying enzymes is essential for regulating its bioactivation, inactivation and, consequently, biological function. Cathepsin G cleaves seven C-terminal amino acids from prochemerin (chemerin-156), elastase is able to cleave six (chemerin-157), eight (chemerin-155) or eleven (chemerin-152), plasmin cleaves five amino acids (chemerin-158), and tryptase cleaves five (chemerin-158) or eight (chemerin-155). Multiple cleavages might be required to fully activate chemerin, with an initial tryptase cleavage resulting in chemerin with low activity (chemerin-158), and a second cleavage by carboxypeptidase N or B producing highly active chemerin (chemerin-157). As to expression, expressed at the highest levels in placenta, liver, and white adipose tissue (WAT), and to a lesser extent in many other tissues such as lung, brown adipose tissue, heart, ovary, kidney, skeletal muscle and pancreas. Within WAT, expression is enriched in adipocytes as compared to the stromal vascular fraction. Expression and secretion increases dramatically with adipogenesis. Highly expressed in skin (basal and suprabasal layers of the epidermis, hair follicles and endothelial cells). Expression is elevated in numerous metabolic and inflammatory diseases including psoriasis, obesity, type 2 diabetes, metabolic syndrome and cardiovascular disease.

The protein resides in the secreted. Its function is as follows. Adipocyte-secreted protein (adipokine) that regulates adipogenesis, metabolism and inflammation through activation of the chemokine-like receptor 1 (CMKLR1). Also acts as a ligand for CMKLR2. Can also bind to C-C chemokine receptor-like 2 (CCRL2), but with a lower affinity than it does to CMKLR1 or CMKLR2. Positively regulates adipocyte differentiation, modulates the expression of adipocyte genes involved in lipid and glucose metabolism and might play a role in angiogenesis, a process essential for the expansion of white adipose tissue. Also acts as a pro-inflammatory adipokine, causing an increase in secretion of pro-inflammatory and prodiabetic adipokines, which further impair adipose tissue metabolic function and have negative systemic effects including impaired insulin sensitivity, altered glucose and lipid metabolism, and a decrease in vascular function in other tissues. Can have both pro- and anti-inflammatory properties depending on the modality of enzymatic cleavage by different classes of proteases. Acts as a chemotactic factor for leukocyte populations expressing CMKLR1, particularly immature plasmacytoid dendritic cells, but also immature myeloid DCs, macrophages and natural killer cells. Exerts an anti-inflammatory role by preventing TNF/TNFA-induced VCAM1 expression and monocytes adhesion in vascular endothelial cells. The effect is mediated via inhibiting activation of NF-kappa-B and CRK/p38 through stimulation of AKT1/NOS3 signaling and nitric oxide production. Its dual role in inflammation and metabolism might provide a link between chronic inflammation and obesity, as well as obesity-related disorders such as type 2 diabetes and cardiovascular disease. Exhibits an antimicrobial function in the skin. The sequence is that of Retinoic acid receptor responder protein 2 (RARRES2) from Homo sapiens (Human).